A 569-amino-acid polypeptide reads, in one-letter code: Aspartic proteinase 3 (569 aa).

A signal peptide spans 1–21; it reads MKLKTVRSAVLSSLFASQVLG. Residues 22 to 67 constitute a propeptide that is removed on maturation; it reads KIIPAANKRDDDSNSKFVKLPFHKLYGDSLENVGSDKKPEVRLLKR. One can recognise a Peptidase A1 domain in the interval 83 to 475; it reads YSVDLEVGTP…DLENLEISMA (393 aa). A glycan (N-linked (GlcNAc...) asparagine) is linked at asparagine 95. Aspartate 101 is a catalytic residue. 6 N-linked (GlcNAc...) asparagine glycosylation sites follow: asparagine 203, asparagine 232, asparagine 242, asparagine 245, asparagine 299, and asparagine 358. Aspartate 371 is an active-site residue. N-linked (GlcNAc...) asparagine glycosylation is found at asparagine 480, asparagine 522, and asparagine 532. The GPI-anchor amidated asparagine moiety is linked to residue asparagine 548. Positions 549–569 are cleaved as a propeptide — removed in mature form; that stretch reads VGDHIVPSLPLTLISLLFAFI.

This sequence belongs to the peptidase A1 family. Consists of an alpha and a beta subunit, which are maintained together by a disulfide bond. Post-translationally, the zymogen is transported to the periplasm, where the propeptide is removed and the enzyme is further subjected to an internal, autocatalytic cleavage to generate an alpha/beta two-subunit endopeptidase. The proteolytic processing at the cell surface is regulated by the environmental pH. In terms of processing, extensively N-glycosylated.

Its subcellular location is the cell membrane. It carries out the reaction Hydrolyzes various precursor proteins with Arg or Lys in P1, and commonly Arg or Lys also in P2. The P3 amino acid is usually non-polar, but otherwise additional basic amino acids are favorable in both non-prime and prime positions.. Its function is as follows. Cleaves proteins C-terminally to mono- and paired-basic residues. Involved in the shedding of a subset of GPI-anchored plasma membrane proteins from the cell surface, including itself, GAS1 and MSB2. May also play a role in the maturation of GPI-mannoproteins associated with the cell wall. Can process the alpha-mating factor precursor. Required for cell wall integrity. The sequence is that of Aspartic proteinase 3 (YPS1) from Saccharomyces cerevisiae (strain ATCC 204508 / S288c) (Baker's yeast).